The chain runs to 175 residues: MMIYIGFILSIVFVISFVGFSSKPSPIYGGLVLIVSGGVGCGIVMSFGGSFLGLMVFLIYLGGMLVVFGYTTAMATEQYPEVWVSNATVLSTFILGVLMEAMLVLYMFKNGEVEVVFEFSGMGDWVVCDGGDSGVFNEEIVGVSALYSYGVWIIIVTGWSLFVGVLVVLEVTRGA.

A run of 5 helical transmembrane segments spans residues 1–21 (MMIY…VGFS), 25–45 (SPIY…GIVM), 47–67 (FGGS…MLVV), 88–108 (TVLS…LYMF), and 149–169 (YGVW…LVVL).

It belongs to the complex I subunit 6 family. Core subunit of respiratory chain NADH dehydrogenase (Complex I) which is composed of 45 different subunits.

Its subcellular location is the mitochondrion inner membrane. The enzyme catalyses a ubiquinone + NADH + 5 H(+)(in) = a ubiquinol + NAD(+) + 4 H(+)(out). In terms of biological role, core subunit of the mitochondrial membrane respiratory chain NADH dehydrogenase (Complex I) which catalyzes electron transfer from NADH through the respiratory chain, using ubiquinone as an electron acceptor. Essential for the catalytic activity and assembly of complex I. The protein is NADH-ubiquinone oxidoreductase chain 6 (MT-ND6) of Rhinoceros unicornis (Greater Indian rhinoceros).